The primary structure comprises 540 residues: Signal peptide peptidase-like 3 (540 aa).

Positions 1–28 are cleaved as a signal peptide; the sequence is MSSFDPPNHRYSALVLILLLLGFSVAAA. Topologically, residues 29–194 are lumenal; sequence DDVSWTEDSS…LYAPKRPAVD (166 aa). The 75-residue stretch at 98–172 folds into the PA domain; the sequence is SHLSSRLDGH…ISKSSGDALN (75 aa). 2 N-linked (GlcNAc...) asparagine glycosylation sites follow: Asn-155 and Asn-172. A helical transmembrane segment spans residues 195–215; the sequence is LTAGLLLLMAVGTVVVASLWS. Residues 216–250 are Cytoplasmic-facing; the sequence is ELTDPDQANESYSILAKDVSSAGTRKDDPEKEILD. The chain crosses the membrane as a helical span at residues 251–273; the sequence is ISVTGAVFFIVTASIFLLLLFYF. Residues 274 to 276 lie on the Lumenal side of the membrane; sequence MSS. A helical transmembrane segment spans residues 277 to 299; the sequence is WFVWVLTIFFCIGGMQGMHNIIM. Residues 300–321 lie on the Cytoplasmic side of the membrane; sequence AVILRKCRHLARKSVKLPLLGT. The chain crosses the membrane as a helical span at residues 322–342; it reads MSVLSLLVNIVCLAFAVFWFI. The Lumenal segment spans residues 343–347; that stretch reads KRHTS. Residues 348-368 form a helical membrane-spanning segment; the sequence is YSWVGQDILGICLMITALQVV. The Cytoplasmic portion of the chain corresponds to 369–377; it reads RLPNIKVAT. A helical membrane pass occupies residues 378-398; sequence VLLCCAFVYDIFWVFISPLIF. Residue Asp-387 is part of the active site. Over 399-429 the chain is Lumenal; sequence HESVMIVVAQGDSSTGESIPMLLRIPRFFDP. A helical transmembrane segment spans residues 430-450; that stretch reads WGGYDMIGFGDILFPGLLISF. Asp-440 is a catalytic residue. The Cytoplasmic segment spans residues 451–466; sequence ASRYDKIKKRVISNGY. A helical membrane pass occupies residues 467-487; it reads FLWLTIGYGIGLLLTYLGLYL. The Lumenal segment spans residues 488 to 492; sequence MDGHG. A helical transmembrane segment spans residues 493-513; sequence QPALLYIVPCTLGLAVILGLV. Residues 494-496 carry the PAL motif; the sequence is PAL. The Cytoplasmic segment spans residues 514–540; it reads RGELKELWNYGIEESESHTPEDPMPVA.

This sequence belongs to the peptidase A22B family. In terms of processing, glycosylated. In terms of tissue distribution, ubiquitous.

It localises to the endosome membrane. In terms of biological role, intramembrane-cleaving aspartic protease (I-CLiP) that cleaves type II membrane signal peptides in the hydrophobic plane of the membrane. This chain is Signal peptide peptidase-like 3 (SPPL3), found in Arabidopsis thaliana (Mouse-ear cress).